The following is a 167-amino-acid chain: Phosphopantetheine adenylyltransferase (167 aa).

Threonine 9 contributes to the substrate binding site. ATP is bound by residues threonine 9–phenylalanine 10 and histidine 17. Substrate contacts are provided by lysine 41, leucine 73, and arginine 87. Residues glycine 88–arginine 90, glutamate 98, and tyrosine 123–threonine 129 each bind ATP.

Belongs to the bacterial CoaD family. In terms of assembly, homohexamer. Mg(2+) serves as cofactor.

Its subcellular location is the cytoplasm. It catalyses the reaction (R)-4'-phosphopantetheine + ATP + H(+) = 3'-dephospho-CoA + diphosphate. It functions in the pathway cofactor biosynthesis; coenzyme A biosynthesis; CoA from (R)-pantothenate: step 4/5. Reversibly transfers an adenylyl group from ATP to 4'-phosphopantetheine, yielding dephospho-CoA (dPCoA) and pyrophosphate. This chain is Phosphopantetheine adenylyltransferase, found in Bordetella avium (strain 197N).